The following is a 428-amino-acid chain: Serine--tRNA ligase (428 aa).

Position 231 to 233 (231 to 233) interacts with L-serine; it reads TAE. An ATP-binding site is contributed by 262–264; that stretch reads RSE. Glutamate 285 is a binding site for L-serine. 349-352 contacts ATP; it reads EISS. L-serine is bound at residue serine 385.

Belongs to the class-II aminoacyl-tRNA synthetase family. Type-1 seryl-tRNA synthetase subfamily. In terms of assembly, homodimer. The tRNA molecule binds across the dimer.

The protein localises to the cytoplasm. The catalysed reaction is tRNA(Ser) + L-serine + ATP = L-seryl-tRNA(Ser) + AMP + diphosphate + H(+). The enzyme catalyses tRNA(Sec) + L-serine + ATP = L-seryl-tRNA(Sec) + AMP + diphosphate + H(+). It participates in aminoacyl-tRNA biosynthesis; selenocysteinyl-tRNA(Sec) biosynthesis; L-seryl-tRNA(Sec) from L-serine and tRNA(Sec): step 1/1. Its function is as follows. Catalyzes the attachment of serine to tRNA(Ser). Is also able to aminoacylate tRNA(Sec) with serine, to form the misacylated tRNA L-seryl-tRNA(Sec), which will be further converted into selenocysteinyl-tRNA(Sec). The protein is Serine--tRNA ligase of Staphylococcus aureus (strain USA300).